The sequence spans 30 residues: Kalata-B10 (30 aa).

The cyclopeptide (Gly-Asp) cross-link spans 1 to 30 (GLPTCGETCFGGTCNTPGCSCSSWPICTRD). 3 disulfide bridges follow: Cys-5/Cys-19, Cys-9/Cys-21, and Cys-14/Cys-27.

This sequence belongs to the cyclotide family. Moebius subfamily. This peptide occurs in both cyclic and linear forms. The linear form contains unmodified Trp-24, the cyclic peptide occurs in two forms with unmodified Trp-24, and with Trp-24 oxidized to form oxindolylalanine. Oxidation is enhanced by exposure to sunlight.

Functionally, probably participates in a plant defense mechanism. This Oldenlandia affinis protein is Kalata-B10.